The chain runs to 492 residues: UPF0652 protein C22H10.08 (492 aa).

This sequence belongs to the UPF0652 family.

It is found in the cytoplasm. Its subcellular location is the nucleus. This chain is UPF0652 protein C22H10.08, found in Schizosaccharomyces pombe (strain 972 / ATCC 24843) (Fission yeast).